Here is a 655-residue protein sequence, read N- to C-terminus: FYVE, RhoGEF and PH domain-containing protein 2 (655 aa).

Residues S10, S39, and S47 each carry the phosphoserine modification. Disordered regions lie at residues 21-52 (NRTPGEAPGSHSLEDQPHSPEHQLSLSPEPWE) and 84-103 (WRRSCQPGVSPGPETQEPEE). Over residues 32 to 41 (SLEDQPHSPE) the composition is skewed to basic and acidic residues. A DH domain is found at 102 to 290 (EEKRVVRELL…FSAAQHSNAA (189 aa)). Residues 319–418 (TLLREGPVLK…WMQACQAAID (100 aa)) enclose the PH 1 domain. The segment at 458 to 518 (DKMVTMCMRC…VCLTCYTFLT (61 aa)) adopts an FYVE-type zinc-finger fold. C464, C467, C481, C484, C489, C492, C510, and C513 together coordinate Zn(2+). The region spanning 544–641 (QSLVCSFLQL…WVTAIKRAAS (98 aa)) is the PH 2 domain. Phosphothreonine is present on T644. S654 is subject to Phosphoserine.

As to expression, lymph node, spleen, B-lymphocytes and macrophages (at protein level). Expressed at high levels in lymph node, spleen, B-lymphocytes and bone marrow macrophages. Expressed at lower levels in mature bone marrow dendritic cells. In both immature and mature B-cells, expression is down-regulated by prior B-cell receptor signaling. Expression remains high in resting B and memory cells but declines upon differentiation into plasma cells.

The protein resides in the cytoplasm. It is found in the nucleus. It localises to the early endosome. The protein localises to the early endosome membrane. Its subcellular location is the cell projection. The protein resides in the ruffle membrane. It is found in the cytoskeleton. Functionally, activates CDC42, a member of the Ras-like family of Rho- and Rac proteins, by exchanging bound GDP for free GTP. Activates JNK1 via CDC42 but not RAC1. Binds to phosphatidylinositol 4,5-bisphosphate, phosphatidylinositol 3,4,5-trisphosphate, phosphatidylinositol 5-monophosphate, phosphatidylinositol 4-monophosphate and phosphatidylinositol 3-monophosphate. The protein is FYVE, RhoGEF and PH domain-containing protein 2 (Fgd2) of Mus musculus (Mouse).